We begin with the raw amino-acid sequence, 346 residues long: Transcription initiation factor TFIID subunit 11 (346 aa).

The region spanning 131–329 (LDKDQTNRFE…RLYRLQSDTL (199 aa)) is the Histone-fold domain. A phosphoserine mark is found at Ser-236 and Ser-238.

Belongs to the TAF11 family. In terms of assembly, TAF11 heterodimerizes with TAF13, but they do not seem to form a heterotetramer like TAF6/TAF9. The 1.2 MDa TFIID complex is composed of TATA binding protein (TBP) and the 14 TBP-associated factors (one copy of each TAF1, TAF2, TAF3, TAF7, TAF8, TAF11, TAF13, two copies of each TAF4, TAF5, TAF6, TAF9, TAF10, TAF12, and three copies of TAF14), ranging in size from 17 to 150 kDa.

It is found in the nucleus. Functions as a component of the DNA-binding general transcription factor complex TFIID. Binding of TFIID to a promoter (with or without TATA element) is the initial step in pre-initiation complex (PIC) formation. TFIID plays a key role in the regulation of gene expression by RNA polymerase II through different activities such as transcription activator interaction, core promoter recognition and selectivity, TFIIA and TFIIB interaction, chromatin modification (histone acetylation by TAF1), facilitation of DNA opening and initiation of transcription. In Saccharomyces cerevisiae (strain ATCC 204508 / S288c) (Baker's yeast), this protein is Transcription initiation factor TFIID subunit 11 (TAF11).